Reading from the N-terminus, the 262-residue chain is Ribosomal RNA small subunit methyltransferase A (262 aa).

The S-adenosyl-L-methionine site is built by His16, Leu18, Gly43, Glu64, Asp89, and Asn109.

It belongs to the class I-like SAM-binding methyltransferase superfamily. rRNA adenine N(6)-methyltransferase family. RsmA subfamily.

It localises to the cytoplasm. It catalyses the reaction adenosine(1518)/adenosine(1519) in 16S rRNA + 4 S-adenosyl-L-methionine = N(6)-dimethyladenosine(1518)/N(6)-dimethyladenosine(1519) in 16S rRNA + 4 S-adenosyl-L-homocysteine + 4 H(+). Functionally, specifically dimethylates two adjacent adenosines (A1518 and A1519) in the loop of a conserved hairpin near the 3'-end of 16S rRNA in the 30S particle. May play a critical role in biogenesis of 30S subunits. This is Ribosomal RNA small subunit methyltransferase A from Xanthomonas axonopodis pv. citri (strain 306).